Here is a 101-residue protein sequence, read N- to C-terminus: Protein Tat (101 aa).

The segment at 1 to 24 (MEPVDPSLDPWNHPGSQPTTPCTK) is interaction with human CREBBP. The tract at residues 1-48 (MEPVDPSLDPWNHPGSQPTTPCTKCYCKRCCFHCQWCFTTKGLGISYG) is transactivation. 3 residues coordinate Zn(2+): Cys22, Cys25, and Cys27. Positions 22–37 (CTKCYCKRCCFHCQWC) are cysteine-rich. Lys28 bears the N6-acetyllysine; by host PCAF mark. Zn(2+)-binding residues include Cys30, His33, Cys34, and Cys37. The core stretch occupies residues 38-48 (FTTKGLGISYG). A compositionally biased stretch (basic residues) spans 48–58 (GRKKRRQRHRT). The interval 48–101 (GRKKRRQRHRTPQSSQVHQNSLPKQPLSQARGDPTGPKESKKEVESKAKTDPCA) is disordered. The Nuclear localization signal, RNA-binding (TAR), and protein transduction motif lies at 49–57 (RKKRRQRHR). Residues 49 to 86 (RKKRRQRHRTPQSSQVHQNSLPKQPLSQARGDPTGPKE) form an interaction with the host capping enzyme RNGTT region. Residues Lys50 and Lys51 each carry the N6-acetyllysine; by host EP300 and GCN5L2 modification. Asymmetric dimethylarginine; by host PRMT6 is present on residues Arg52 and Arg53. Polar residues predominate over residues 59–75 (PQSSQVHQNSLPKQPLS). Lys71 is covalently cross-linked (Glycyl lysine isopeptide (Lys-Gly) (interchain with G-Cter in ubiquitin)). The short motif at 78 to 80 (RGD) is the Cell attachment site element. The span at 83-101 (GPKESKKEVESKAKTDPCA) shows a compositional bias: basic and acidic residues.

Belongs to the lentiviruses Tat family. As to quaternary structure, interacts with host CCNT1. Associates with the P-TEFb complex composed at least of Tat, P-TEFb (CDK9 and CCNT1), TAR RNA, RNA Pol II. Recruits the HATs CREBBP, TAF1/TFIID, EP300, PCAF and GCN5L2. Interacts with host KAT5/Tip60; this interaction targets the latter to degradation. Interacts with the host deacetylase SIRT1. Interacts with host capping enzyme RNGTT; this interaction stimulates RNGTT. Binds to host KDR, and to the host integrins ITGAV/ITGB3 and ITGA5/ITGB1. Interacts with host KPNB1/importin beta-1 without previous binding to KPNA1/importin alpha-1. Interacts with EIF2AK2. Interacts with host nucleosome assembly protein NAP1L1; this interaction may be required for the transport of Tat within the nucleus, since the two proteins interact at the nuclear rim. Interacts with host C1QBP/SF2P32; this interaction involves lysine-acetylated Tat. Interacts with the host chemokine receptors CCR2, CCR3 and CXCR4. Interacts with host DPP4/CD26; this interaction may trigger an anti-proliferative effect. Interacts with host LDLR. Interacts with the host extracellular matrix metalloproteinase MMP1. Interacts with host PRMT6; this interaction mediates Tat's methylation. Interacts with, and is ubiquitinated by MDM2/Hdm2. Interacts with host PSMC3 and HTATIP2. Interacts with STAB1; this interaction may overcome SATB1-mediated repression of IL2 and IL2RA (interleukin) in T cells by binding to the same domain than HDAC1. Interacts (when acetylated) with human CDK13, thereby increasing HIV-1 mRNA splicing and promoting the production of the doubly spliced HIV-1 protein Nef. Interacts with host TBP; this interaction modulates the activity of transcriptional pre-initiation complex. Interacts with host RELA. Interacts with host PLSCR1; this interaction negatively regulates Tat transactivation activity by altering its subcellular distribution. In terms of processing, asymmetrical arginine methylation by host PRMT6 seems to diminish the transactivation capacity of Tat and affects the interaction with host CCNT1. Acetylation by EP300, CREBBP, GCN5L2/GCN5 and PCAF regulates the transactivation activity of Tat. EP300-mediated acetylation of Lys-50 promotes dissociation of Tat from the TAR RNA through the competitive binding to PCAF's bromodomain. In addition, the non-acetylated Tat's N-terminus can also interact with PCAF. PCAF-mediated acetylation of Lys-28 enhances Tat's binding to CCNT1. Lys-50 is deacetylated by SIRT1. Post-translationally, polyubiquitination by host MDM2 does not target Tat to degradation, but activates its transactivation function and fosters interaction with CCNT1 and TAR RNA. In terms of processing, phosphorylated by EIF2AK2 on serine and threonine residues adjacent to the basic region important for TAR RNA binding and function. Phosphorylation of Tat by EIF2AK2 is dependent on the prior activation of EIF2AK2 by dsRNA.

It is found in the host nucleus. Its subcellular location is the host nucleolus. The protein localises to the host cytoplasm. It localises to the secreted. Functionally, transcriptional activator that increases RNA Pol II processivity, thereby increasing the level of full-length viral transcripts. Recognizes a hairpin structure at the 5'-LTR of the nascent viral mRNAs referred to as the transactivation responsive RNA element (TAR) and recruits the cyclin T1-CDK9 complex (P-TEFb complex) that will in turn hyperphosphorylate the RNA polymerase II to allow efficient elongation. The CDK9 component of P-TEFb and other Tat-activated kinases hyperphosphorylate the C-terminus of RNA Pol II that becomes stabilized and much more processive. Other factors such as HTATSF1/Tat-SF1, SUPT5H/SPT5, and HTATIP2 are also important for Tat's function. Besides its effect on RNA Pol II processivity, Tat induces chromatin remodeling of proviral genes by recruiting the histone acetyltransferases (HATs) CREBBP, EP300 and PCAF to the chromatin. This also contributes to the increase in proviral transcription rate, especially when the provirus integrates in transcriptionally silent region of the host genome. To ensure maximal activation of the LTR, Tat mediates nuclear translocation of NF-kappa-B by interacting with host RELA. Through its interaction with host TBP, Tat may also modulate transcription initiation. Tat can reactivate a latently infected cell by penetrating in it and transactivating its LTR promoter. In the cytoplasm, Tat is thought to act as a translational activator of HIV-1 mRNAs. Its function is as follows. Extracellular circulating Tat can be endocytosed by surrounding uninfected cells via the binding to several surface receptors such as CD26, CXCR4, heparan sulfate proteoglycans (HSPG) or LDLR. Neurons are rarely infected, but they internalize Tat via their LDLR. Through its interaction with nuclear HATs, Tat is potentially able to control the acetylation-dependent cellular gene expression. Modulates the expression of many cellular genes involved in cell survival, proliferation or in coding for cytokines or cytokine receptors. Tat plays a role in T-cell and neurons apoptosis. Tat induced neurotoxicity and apoptosis probably contribute to neuroAIDS. Circulating Tat also acts as a chemokine-like and/or growth factor-like molecule that binds to specific receptors on the surface of the cells, affecting many cellular pathways. In the vascular system, Tat binds to ITGAV/ITGB3 and ITGA5/ITGB1 integrins dimers at the surface of endothelial cells and competes with bFGF for heparin-binding sites, leading to an excess of soluble bFGF. In Human immunodeficiency virus type 1 group M subtype F1 (isolate VI850) (HIV-1), this protein is Protein Tat.